A 270-amino-acid polypeptide reads, in one-letter code: Fibroblast growth factor 5 (270 aa).

A signal peptide spans 1-20; that stretch reads MSLSLLLLLFLSHLILSAWA. The segment at 26–84 is disordered; sequence LAPKGQPGPAATGRNPGGAGGSSTSGGTTSSSSSSVSSAPGASPGIRGSGSEQGSFQWS. Residues 40–49 are compositionally biased toward gly residues; it reads NPGGAGGSST. Residues 50–70 show a composition bias toward low complexity; sequence SGGTTSSSSSSVSSAPGASPG. A compositionally biased stretch (polar residues) spans 75–84; the sequence is GSEQGSFQWS. N-linked (GlcNAc...) asparagine glycosylation occurs at Asn112. The segment at 237–257 is disordered; that stretch reads EKKKPPSHVKPKVPLSAPRKS.

This sequence belongs to the heparin-binding growth factors family. Interacts with FGFR1 and FGFR2. Affinity between fibroblast growth factors (FGFs) and their receptors is increased by heparan sulfate glycosaminoglycans that function as coreceptors.

The protein resides in the secreted. In terms of biological role, plays an important role in the regulation of cell proliferation and cell differentiation. Required for normal regulation of the hair growth cycle. Functions as an inhibitor of hair elongation by promoting progression from anagen, the growth phase of the hair follicle, into catagen the apoptosis-induced regression phase. This Canis lupus familiaris (Dog) protein is Fibroblast growth factor 5 (FGF5).